The following is a 73-amino-acid chain: Translation initiation factor IF-1 (73 aa).

The S1-like domain maps to 1–72; sequence MPKKDAIEVE…TRGRVTYRFK (72 aa).

This sequence belongs to the IF-1 family. As to quaternary structure, component of the 30S ribosomal translation pre-initiation complex which assembles on the 30S ribosome in the order IF-2 and IF-3, IF-1 and N-formylmethionyl-tRNA(fMet); mRNA recruitment can occur at any time during PIC assembly.

The protein resides in the cytoplasm. In terms of biological role, one of the essential components for the initiation of protein synthesis. Stabilizes the binding of IF-2 and IF-3 on the 30S subunit to which N-formylmethionyl-tRNA(fMet) subsequently binds. Helps modulate mRNA selection, yielding the 30S pre-initiation complex (PIC). Upon addition of the 50S ribosomal subunit IF-1, IF-2 and IF-3 are released leaving the mature 70S translation initiation complex. The sequence is that of Translation initiation factor IF-1 from Dehalococcoides mccartyi (strain ATCC BAA-2266 / KCTC 15142 / 195) (Dehalococcoides ethenogenes (strain 195)).